Consider the following 237-residue polypeptide: Large ribosomal subunit protein uL1 (237 aa).

It belongs to the universal ribosomal protein uL1 family. In terms of assembly, part of the 50S ribosomal subunit.

In terms of biological role, binds directly to 23S rRNA. The L1 stalk is quite mobile in the ribosome, and is involved in E site tRNA release. Protein L1 is also a translational repressor protein, it controls the translation of the L11 operon by binding to its mRNA. This Thermosynechococcus vestitus (strain NIES-2133 / IAM M-273 / BP-1) protein is Large ribosomal subunit protein uL1.